Here is an 85-residue protein sequence, read N- to C-terminus: Elicitor peptide 7 (85 aa).

Residues 1-62 (MEGEGRREDG…TEVVNIPRSV (62 aa)) constitute a propeptide that is removed on maturation. Residues 66–85 (NVAARKGKQQTSSGKGGGTN) form a disordered region.

The protein belongs to the brassicaceae elicitor peptide family.

Functionally, elicitor of plant defense. The polypeptide is Elicitor peptide 7 (PEP7) (Arabidopsis thaliana (Mouse-ear cress)).